We begin with the raw amino-acid sequence, 328 residues long: Ribosomal RNA large subunit methyltransferase F (328 aa).

The interval 1-38 (MTDTPKPPRKKPQRPAKPAAPREKATLHPRNRHQGHYD) is disordered.

It belongs to the methyltransferase superfamily. METTL16/RlmF family.

It localises to the cytoplasm. It carries out the reaction adenosine(1618) in 23S rRNA + S-adenosyl-L-methionine = N(6)-methyladenosine(1618) in 23S rRNA + S-adenosyl-L-homocysteine + H(+). Specifically methylates the adenine in position 1618 of 23S rRNA. The polypeptide is Ribosomal RNA large subunit methyltransferase F (Pseudomonas syringae pv. tomato (strain ATCC BAA-871 / DC3000)).